Reading from the N-terminus, the 514-residue chain is Exoglucanase 1 (514 aa).

The first 17 residues, 1 to 17 (MYRKLAVISAFLATARA), serve as a signal peptide directing secretion. Q18 bears the Pyrrolidone carboxylic acid mark. A catalytic region spans residues 18-453 (QSACTLQSET…GSTGNPSGGN (436 aa)). Disulfide bonds link C21–C89, C36–C42, C67–C88, C78–C84, C155–C414, C189–C227, C193–C226, C247–C273, C255–C260, and C278–C348. N-linked (GlcNAc) asparagine glycosylation is present at N62. Catalysis depends on E229, which acts as the Nucleophile. E234 functions as the Proton donor/acceptor in the catalytic mechanism. N287 carries N-linked (GlcNAc...) (high mannose) asparagine glycosylation. Residue N401 is glycosylated (N-linked (GlcNAc) asparagine). The span at 401–437 (NETSSTPGAVRGSCSTSSGVPAQVESQSPNAKVTFSN) shows a compositional bias: polar residues. Residues 401–481 (NETSSTPGAV…TGSSPGPTQS (81 aa)) are disordered. The segment at 454 to 478 (PPGGNPPGTTTTRRPATTTGSSPGP) is linker. Over residues 460–479 (PGTTTTRRPATTTGSSPGPT) the composition is skewed to low complexity. An O-linked (Man) threonine glycan is attached at T462. O-linked (Man...) threonine glycans are attached at residues T463, T464, and T465. The O-linked (Man) threonine glycan is linked to T470. T471 and T472 each carry an O-linked (Man...) threonine glycan. 2 O-linked (Man) serine glycosylation sites follow: S474 and S475. Positions 478–514 (PTQSHYGQCGGIGYSGPTVCASGTTCQVLNPYYSQCL) constitute a CBM1 domain. T479 carries an O-linked (Man) threonine glycan. 2 O-linked (Man) serine glycosylation sites follow: S481 and S492. 2 cysteine pairs are disulfide-bonded: C486–C503 and C497–C513.

The protein belongs to the glycosyl hydrolase 7 (cellulase C) family. N-glycosylated. A high mannose glycan is attached to Asn-287 (predominantly Man(8)GlcNAc(2)) and single GlcNAc occupancy is observed at Asn-62 and Asn-401 with some site heterogeneity depending on strains and fermentation conditions. Post-translationally, O-glycosylated. Within the linker domain, all 8 threonines are variably glycosylated with between at least one, and up to three, mannose residues per site. All serines in this domain are at least partially glycosylated with a single mannose residue. O-glycosylation of the cellulase linker provides protection from proteolysis. Linker glycans also contribute to binding affinity of cellobiohydrolases to cellulose.

The protein localises to the secreted. The catalysed reaction is Hydrolysis of (1-&gt;4)-beta-D-glucosidic linkages in cellulose and cellotetraose, releasing cellobiose from the non-reducing ends of the chains.. Its function is as follows. Exocellobiohydrolases (CBH) that catalyzes the hydrolysis of 1,4-beta-D-glucosidic bonds in cellulose to release the disaccharide cellobiose. The degradation of cellulose involves an interplay between different cellulolytic enzymes. Hydrolysis starts with endoglucanases (EGs), which cut internal beta-1,4-glucosidic bonds in cellulose to reduce the polymerization degree of the substrate and create new chain ends for exocellobiohydrolases (CBHs). The CBHs release the disaccharide cellobiose from the non-reducing end of the cellulose polymer chain. Finally, beta-1,4-glucosidases hydrolyze the cellobiose and other short cello-oligosaccharides into glucose units. The chain is Exoglucanase 1 (cbh1) from Hypocrea jecorina (strain ATCC 56765 / BCRC 32924 / NRRL 11460 / Rut C-30) (Trichoderma reesei).